The primary structure comprises 427 residues: Flotillin-1 (427 aa).

A phosphoserine mark is found at Ser-19, Ser-163, and Ser-385. Phosphothreonine is present on Thr-387.

Belongs to the band 7/mec-2 family. Flotillin subfamily. Heterooligomeric complex of flotillin-1 and flotillin-2 and caveolin-1 and caveolin-2. Interacts with ECPAS.

It localises to the cell membrane. The protein resides in the endosome. It is found in the membrane. The protein localises to the caveola. Its subcellular location is the melanosome. It localises to the membrane raft. Functionally, may act as a scaffolding protein within caveolar membranes, functionally participating in formation of caveolae or caveolae-like vesicles. This Macaca mulatta (Rhesus macaque) protein is Flotillin-1 (FLOT1).